The sequence spans 318 residues: Mevalonate 3-kinase (318 aa).

L19 lines the substrate pocket. ATP-binding positions include 96-100 (YSSQN) and 105-108 (SGSS). Residues E140 and R144 each coordinate substrate. R185 and S188 together coordinate ATP.

The protein belongs to the GHMP kinase family. In terms of assembly, homodimer.

The enzyme catalyses (R)-mevalonate + ATP = (R)-3-phosphomevalonate + ADP + H(+). The protein operates within isoprenoid biosynthesis; isopentenyl diphosphate biosynthesis via mevalonate pathway. Its function is as follows. Catalyzes the phosphorylation of mevalonate (MVA) to yield mevalonate-3-phosphate. Functions in an alternative mevalonate pathway, only present in extreme acidophiles of the Thermoplasmatales order, which passes through mevalonate 3-phosphate rather than mevalonate 5-phosphate. In Thermoplasma acidophilum (strain ATCC 25905 / DSM 1728 / JCM 9062 / NBRC 15155 / AMRC-C165), this protein is Mevalonate 3-kinase.